Reading from the N-terminus, the 202-residue chain is 3-isopropylmalate dehydratase small subunit 2 (202 aa).

It belongs to the LeuD family. LeuD type 1 subfamily. As to quaternary structure, heterodimer of LeuC and LeuD.

It catalyses the reaction (2R,3S)-3-isopropylmalate = (2S)-2-isopropylmalate. It functions in the pathway amino-acid biosynthesis; L-leucine biosynthesis; L-leucine from 3-methyl-2-oxobutanoate: step 2/4. Catalyzes the isomerization between 2-isopropylmalate and 3-isopropylmalate, via the formation of 2-isopropylmaleate. In Bordetella parapertussis (strain 12822 / ATCC BAA-587 / NCTC 13253), this protein is 3-isopropylmalate dehydratase small subunit 2.